A 236-amino-acid chain; its full sequence is Biosynthetic peptidoglycan transglycosylase (236 aa).

Residues 12–31 (ALLWFAAGSIAVVLVLRWVP) form a helical membrane-spanning segment.

Belongs to the glycosyltransferase 51 family.

The protein localises to the cell inner membrane. The catalysed reaction is [GlcNAc-(1-&gt;4)-Mur2Ac(oyl-L-Ala-gamma-D-Glu-L-Lys-D-Ala-D-Ala)](n)-di-trans,octa-cis-undecaprenyl diphosphate + beta-D-GlcNAc-(1-&gt;4)-Mur2Ac(oyl-L-Ala-gamma-D-Glu-L-Lys-D-Ala-D-Ala)-di-trans,octa-cis-undecaprenyl diphosphate = [GlcNAc-(1-&gt;4)-Mur2Ac(oyl-L-Ala-gamma-D-Glu-L-Lys-D-Ala-D-Ala)](n+1)-di-trans,octa-cis-undecaprenyl diphosphate + di-trans,octa-cis-undecaprenyl diphosphate + H(+). It participates in cell wall biogenesis; peptidoglycan biosynthesis. Its function is as follows. Peptidoglycan polymerase that catalyzes glycan chain elongation from lipid-linked precursors. In Pseudomonas entomophila (strain L48), this protein is Biosynthetic peptidoglycan transglycosylase.